The primary structure comprises 250 residues: ATP synthase subunit a (250 aa).

The next 6 membrane-spanning stretches (helical) occupy residues 25-45 (VSFTNSAAFMVGIVALIFFFL), 84-104 (VFFPLVFSLFVFVFVANVIGL), 115-135 (IVVTAALALLVIGTVVIYGFY), 141-161 (FLHLFVPSGVPAFLLPFIVLI), 187-209 (ALKVFAFFVVGLGSAGFLGWLGA), and 223-243 (ELLVAILQAYVFAVLTSIYLN).

This sequence belongs to the ATPase A chain family. As to quaternary structure, F-type ATPases have 2 components, CF(1) - the catalytic core - and CF(0) - the membrane proton channel. CF(1) has five subunits: alpha(3), beta(3), gamma(1), delta(1), epsilon(1). CF(0) has three main subunits: a(1), b(2) and c(9-12). The alpha and beta chains form an alternating ring which encloses part of the gamma chain. CF(1) is attached to CF(0) by a central stalk formed by the gamma and epsilon chains, while a peripheral stalk is formed by the delta and b chains.

It localises to the cell inner membrane. In terms of biological role, key component of the proton channel; it plays a direct role in the translocation of protons across the membrane. This chain is ATP synthase subunit a, found in Azorhizobium caulinodans (strain ATCC 43989 / DSM 5975 / JCM 20966 / LMG 6465 / NBRC 14845 / NCIMB 13405 / ORS 571).